A 248-amino-acid chain; its full sequence is Meiotically up-regulated gene 110 protein (248 aa).

Residues 23-43 (LRFVFWFSVLIPIFFIALIII) form a helical membrane-spanning segment.

It is found in the membrane. Has a role in meiosis. This chain is Meiotically up-regulated gene 110 protein (mug110), found in Schizosaccharomyces pombe (strain 972 / ATCC 24843) (Fission yeast).